A 538-amino-acid polypeptide reads, in one-letter code: CTP synthase (538 aa).

The segment at 1-270 (MSRTKFIFVT…DEVVLKTMGM (270 aa)) is amidoligase domain. Ser-15 contributes to the CTP binding site. Position 15 (Ser-15) interacts with UTP. Position 16–21 (16–21 (SLGKGV)) interacts with ATP. Tyr-56 provides a ligand contact to L-glutamine. An ATP-binding site is contributed by Asp-73. Mg(2+)-binding residues include Asp-73 and Glu-143. Residues 150–152 (DIE), 190–195 (KTKPTQ), and Lys-226 contribute to the CTP site. UTP contacts are provided by residues 190 to 195 (KTKPTQ) and Lys-226. One can recognise a Glutamine amidotransferase type-1 domain in the interval 295-537 (QIAVVGKYIS…IRASVKYSKK (243 aa)). Gly-357 contacts L-glutamine. Cys-384 functions as the Nucleophile; for glutamine hydrolysis in the catalytic mechanism. Residues 385-388 (LGMQ), Glu-408, and Arg-465 contribute to the L-glutamine site. Active-site residues include His-510 and Glu-512.

Belongs to the CTP synthase family. Homotetramer.

The enzyme catalyses UTP + L-glutamine + ATP + H2O = CTP + L-glutamate + ADP + phosphate + 2 H(+). It carries out the reaction L-glutamine + H2O = L-glutamate + NH4(+). It catalyses the reaction UTP + NH4(+) + ATP = CTP + ADP + phosphate + 2 H(+). It participates in pyrimidine metabolism; CTP biosynthesis via de novo pathway; CTP from UDP: step 2/2. Its activity is regulated as follows. Allosterically activated by GTP, when glutamine is the substrate; GTP has no effect on the reaction when ammonia is the substrate. The allosteric effector GTP functions by stabilizing the protein conformation that binds the tetrahedral intermediate(s) formed during glutamine hydrolysis. Inhibited by the product CTP, via allosteric rather than competitive inhibition. Its function is as follows. Catalyzes the ATP-dependent amination of UTP to CTP with either L-glutamine or ammonia as the source of nitrogen. Regulates intracellular CTP levels through interactions with the four ribonucleotide triphosphates. This is CTP synthase from Leptospira interrogans serogroup Icterohaemorrhagiae serovar copenhageni (strain Fiocruz L1-130).